Consider the following 365-residue polypeptide: Probable L-tyrosine/L-aspartate decarboxylase (365 aa).

Position 224 is an N6-(pyridoxal phosphate)lysine (lysine 224).

This sequence belongs to the group II decarboxylase family. MfnA subfamily. Pyridoxal 5'-phosphate is required as a cofactor.

It catalyses the reaction L-tyrosine + H(+) = tyramine + CO2. It carries out the reaction L-aspartate + H(+) = beta-alanine + CO2. It participates in cofactor biosynthesis; methanofuran biosynthesis. The protein operates within cofactor biosynthesis; coenzyme A biosynthesis. Catalyzes the decarboxylation of L-tyrosine to produce tyramine for methanofuran biosynthesis. Can also catalyze the decarboxylation of L-aspartate to produce beta-alanine for coenzyme A (CoA) biosynthesis. This Methanoregula boonei (strain DSM 21154 / JCM 14090 / 6A8) protein is Probable L-tyrosine/L-aspartate decarboxylase.